A 957-amino-acid polypeptide reads, in one-letter code: ERC protein 2 (957 aa).

Positions 1–13 (MYGSARTITNLEG) are enriched in polar residues. Residues 1–44 (MYGSARTITNLEGSPSRSPRLPRSPRLGHRRTSSGGGGGTGKTL) form a disordered region. Residues 14–25 (SPSRSPRLPRSP) are compositionally biased toward low complexity. Serine 65 and serine 666 each carry phosphoserine. Residues 140 to 917 (RQVRDSTMLD…RMKLMADNYD (778 aa)) are a coiled coil. A disordered region spans residues 918 to 957 (DDHHHYHHHHHHHHHRSPGRSQHSNHRPSPDQDDEEGIWA). The segment covering 922–943 (HYHHHHHHHHHRSPGRSQHSNH) has biased composition (basic residues). Residues 948 to 957 (DQDDEEGIWA) show a composition bias toward acidic residues.

In terms of assembly, interacts with BSN, ERC1, PPFIA1, PPFIA2, PPFIA3 and PPFIA4. Interacts through its C-terminus with the PDZ domain of RIMS1. Part of a complex consisting of ERC2, RIMS1 and UNC13A.

It is found in the cytoplasm. Its subcellular location is the synapse. The protein resides in the presynaptic active zone. The protein localises to the cytoskeleton. In terms of biological role, thought to be involved in the organization of the cytomatrix at the nerve terminals active zone (CAZ) which regulates neurotransmitter release. Seems to act together with BSN. May recruit liprin-alpha proteins to the CAZ. In Homo sapiens (Human), this protein is ERC protein 2 (ERC2).